Here is a 252-residue protein sequence, read N- to C-terminus: Chitooligosaccharide deacetylase (252 aa).

Mg(2+)-binding residues include His-61 and His-125.

The protein belongs to the YdjC deacetylase family. ChbG subfamily. Homodimer. Mg(2+) serves as cofactor.

The protein localises to the cytoplasm. It carries out the reaction N,N'-diacetylchitobiose + H2O = N-acetyl-beta-D-glucosaminyl-(1-&gt;4)-D-glucosamine + acetate. The enzyme catalyses diacetylchitobiose-6'-phosphate + H2O = N'-monoacetylchitobiose-6'-phosphate + acetate. It participates in glycan degradation; chitin degradation. Its function is as follows. Involved in the degradation of chitin. ChbG is essential for growth on the acetylated chitooligosaccharides chitobiose and chitotriose but is dispensable for growth on cellobiose and chitosan dimer, the deacetylated form of chitobiose. Deacetylation of chitobiose-6-P and chitotriose-6-P is necessary for both the activation of the chb promoter by the regulatory protein ChbR and the hydrolysis of phosphorylated beta-glucosides by the phospho-beta-glucosidase ChbF. Catalyzes the removal of only one acetyl group from chitobiose-6-P to yield monoacetylchitobiose-6-P, the inducer of ChbR and the substrate of ChbF. In Salmonella paratyphi B (strain ATCC BAA-1250 / SPB7), this protein is Chitooligosaccharide deacetylase.